Consider the following 183-residue polypeptide: MKKKASLSEEDQTLFRQLMVGTRQIKQDTIVHRPQRKKITEVPTRRLIQEQADASHYFSDEFQPLLNTEGPVKYVREDVSHFELKKMRRGDYSPELFLDLHGLTQLQAKQELGALITACRREHIFCACVMHGHGKHILKQQTPLWLAQHPHVMAFHQAPKEYGGDAALLVLIEVEEWQPPELP.

The Smr domain maps to 98–173; it reads LDLHGLTQLQ…GDAALLVLIE (76 aa).

It belongs to the SmrB family. As to quaternary structure, associates with collided ribosomes, but not with correctly translating polysomes.

In terms of biological role, acts as a ribosome collision sensor. Detects stalled/collided disomes (pairs of ribosomes where the leading ribosome is stalled and a second ribosome has collided with it) and endonucleolytically cleaves mRNA at the 5' boundary of the stalled ribosome. Stalled/collided disomes form a new interface (primarily via the 30S subunits) that binds SmrB. Cleaved mRNA becomes available for tmRNA ligation, leading to ribosomal subunit dissociation and rescue of stalled ribosomes. This Salmonella arizonae (strain ATCC BAA-731 / CDC346-86 / RSK2980) protein is Ribosome rescue factor SmrB.